A 557-amino-acid polypeptide reads, in one-letter code: Glucose-6-phosphate isomerase (557 aa).

The Proton donor role is filled by Glu-359. Residues His-390 and Lys-518 contribute to the active site.

This sequence belongs to the GPI family.

It is found in the cytoplasm. It carries out the reaction alpha-D-glucose 6-phosphate = beta-D-fructose 6-phosphate. The protein operates within carbohydrate biosynthesis; gluconeogenesis. It participates in carbohydrate degradation; glycolysis; D-glyceraldehyde 3-phosphate and glycerone phosphate from D-glucose: step 2/4. Its function is as follows. Catalyzes the reversible isomerization of glucose-6-phosphate to fructose-6-phosphate. This Hahella chejuensis (strain KCTC 2396) protein is Glucose-6-phosphate isomerase.